The chain runs to 260 residues: Adenosylcobinamide-GDP ribazoletransferase (260 aa).

Transmembrane regions (helical) follow at residues 43–63 (LVGT…QFIF), 64–84 (PASV…GGFH), 117–137 (GSLA…ELAL), 143–163 (VAGG…SIIF), 197–217 (VICL…TLFV), and 237–257 (TLGA…LLLW).

The protein belongs to the CobS family. It depends on Mg(2+) as a cofactor.

The protein resides in the cell inner membrane. It carries out the reaction alpha-ribazole + adenosylcob(III)inamide-GDP = adenosylcob(III)alamin + GMP + H(+). It catalyses the reaction alpha-ribazole 5'-phosphate + adenosylcob(III)inamide-GDP = adenosylcob(III)alamin 5'-phosphate + GMP + H(+). It participates in cofactor biosynthesis; adenosylcobalamin biosynthesis; adenosylcobalamin from cob(II)yrinate a,c-diamide: step 7/7. In terms of biological role, joins adenosylcobinamide-GDP and alpha-ribazole to generate adenosylcobalamin (Ado-cobalamin). Also synthesizes adenosylcobalamin 5'-phosphate from adenosylcobinamide-GDP and alpha-ribazole 5'-phosphate. The chain is Adenosylcobinamide-GDP ribazoletransferase from Shewanella amazonensis (strain ATCC BAA-1098 / SB2B).